We begin with the raw amino-acid sequence, 155 residues long: Ribosomal RNA large subunit methyltransferase H (155 aa).

S-adenosyl-L-methionine is bound by residues leucine 73, glycine 104, and leucine 123–leucine 128.

The protein belongs to the RNA methyltransferase RlmH family. As to quaternary structure, homodimer.

The protein localises to the cytoplasm. It catalyses the reaction pseudouridine(1915) in 23S rRNA + S-adenosyl-L-methionine = N(3)-methylpseudouridine(1915) in 23S rRNA + S-adenosyl-L-homocysteine + H(+). Functionally, specifically methylates the pseudouridine at position 1915 (m3Psi1915) in 23S rRNA. This Pseudomonas entomophila (strain L48) protein is Ribosomal RNA large subunit methyltransferase H.